We begin with the raw amino-acid sequence, 397 residues long: Odorant receptor 59a (397 aa).

The Cytoplasmic segment spans residues M1–Y36. The helical transmembrane segment at V37 to I57 threads the bilayer. The Extracellular segment spans residues S58 to D68. N-linked (GlcNAc...) asparagine glycosylation occurs at N62. A helical membrane pass occupies residues I69–I92. Residues K93–V128 are Cytoplasmic-facing. A helical membrane pass occupies residues L129–F149. The Extracellular portion of the chain corresponds to K150 to Q179. The chain crosses the membrane as a helical span at residues I180–V200. Over L201 to L274 the chain is Cytoplasmic. Residues I275–V295 form a helical membrane-spanning segment. Topologically, residues S296 to R301 are extracellular. Residues M302–G322 form a helical membrane-spanning segment. Over T323–R372 the chain is Cytoplasmic. A helical transmembrane segment spans residues I373–I393. At R394 to K397 the chain is on the extracellular side.

Belongs to the insect chemoreceptor superfamily. Heteromeric odorant receptor channel (TC 1.A.69) family. Or2a subfamily. In terms of assembly, interacts with Orco. Complexes exist early in the endomembrane system in olfactory sensory neurons (OSNs), coupling these complexes to the conserved ciliary trafficking pathway. In terms of tissue distribution, expressed in neurons of the third antennal segment.

The protein resides in the cell membrane. Its function is as follows. Odorant receptor which mediates acceptance or avoidance behavior, depending on its substrates. The odorant receptor repertoire encodes a large collection of odor stimuli that vary widely in identity, intensity, and duration. May form a complex with Orco to form odorant-sensing units, providing sensitive and prolonged odorant signaling and calcium permeability. Involved in the behavioral responses to ethyl acetate, anisole, hexanoic acid, and pyrazines. This chain is Odorant receptor 59a (Or59a), found in Drosophila melanogaster (Fruit fly).